Here is a 110-residue protein sequence, read N- to C-terminus: ATP-dependent Clp protease adapter protein ClpS (110 aa).

It belongs to the ClpS family. As to quaternary structure, binds to the N-terminal domain of the chaperone ClpA.

In terms of biological role, involved in the modulation of the specificity of the ClpAP-mediated ATP-dependent protein degradation. The polypeptide is ATP-dependent Clp protease adapter protein ClpS (Bartonella henselae (strain ATCC 49882 / DSM 28221 / CCUG 30454 / Houston 1) (Rochalimaea henselae)).